The following is a 72-amino-acid chain: Light-harvesting polypeptide B-885 alpha-1 chain (72 aa).

Topologically, residues 1 to 16 (SAPAQWKLWLVMDPRT) are cytoplasmic. Residues 17 to 37 (VMIGTAAWLGVLALLIHFLLL) traverse the membrane as a helical segment. H33 lines the a bacteriochlorophyll pocket. At 38 to 72 (GTERFNWIDTGLKEQKATAAAQAAITPAPVTAAAK) the chain is on the periplasmic side.

It belongs to the antenna complex alpha subunit family. The core complex is formed by different alpha and beta chains, binding bacteriochlorophyll molecules, and arranged most probably in tetrameric structures disposed around the reaction center. The non-pigmented gamma chains may constitute additional components.

Its subcellular location is the cell inner membrane. Its function is as follows. Antenna complexes are light-harvesting systems, which transfer the excitation energy to the reaction centers. This chain is Light-harvesting polypeptide B-885 alpha-1 chain, found in Rhodocyclus tenuis (Rhodospirillum tenue).